Here is a 235-residue protein sequence, read N- to C-terminus: Transmembrane emp24 domain-containing protein 9 (235 aa).

The N-terminal stretch at 1–37 is a signal peptide; that stretch reads MAVELGVLLVRPRPGTGLGRVMRTLLLVLWLATRGSA. Topologically, residues 38-202 are lumenal; that stretch reads LYFHIGETEK…RQTSESTNQR (165 aa). The GOLD domain occupies 47-145; the sequence is KKCFIEEIPD…MLRVHLDIQV (99 aa). The tract at residues 121–160 is required for interaction with STX17; that stretch reads CLHSNSTKFSLFAGGMLRVHLDIQVGEHANDYAEIAAKDK. Asn125 is a glycosylation site (N-linked (GlcNAc...) asparagine). A coiled-coil region spans residues 154–184; the sequence is EIAAKDKLSELQLRVRQLVEQVEQIQKEQNY. Residue Lys160 is modified to N6-acetyllysine. Residues 203–222 traverse the membrane as a helical segment; it reads VLWWSILQTLILVAIGVWQM. At 223-235 the chain is on the cytoplasmic side; the sequence is RHLKSFFEAKKLV. The short motif at 228-229 is the COPII vesicle coat-binding element; sequence FF. The COPI vesicle coat-binding motif lies at 228 to 235; sequence FFEAKKLV.

It belongs to the EMP24/GP25L family. Monomer and homodimer in endoplasmic reticulum. Predominantly monomeric and to lesser extent homodimeric in endoplasmic reticulum-Golgi intermediate compartment and cis-Golgi network. Probably oligomerizes with other members of the EMP24/GP25L family such as TMED2, TMED7 and TMED10. Interacts with TMED5. Interacts (via C-terminus) with COPG1; the interaction involves dimeric TMED9. Interacts with PTPN2 and SPAST. Interacts with STX17; the interaction is direct. In terms of processing, N-linked glycosylated containing high mannose.

The protein localises to the endoplasmic reticulum membrane. The protein resides in the golgi apparatus. Its subcellular location is the cis-Golgi network membrane. It is found in the endoplasmic reticulum-Golgi intermediate compartment membrane. It localises to the trans-Golgi network membrane. Functionally, appears to be involved in vesicular protein trafficking, mainly in the early secretory pathway. In COPI vesicle-mediated retrograde transport involved in the coatomer recruitment to membranes of the early secretory pathway. Increases coatomer-dependent activity of ARFGAP2. Thought to play a crucial role in the specific retention of p24 complexes in cis-Golgi membranes; specifically contributes to the coupled localization of TMED2 and TMED10 in the cis-Golgi network. May be involved in organization of intracellular membranes, such as of the ER-Golgi intermediate compartment and the Golgi apparatus. Involved in ER localization of PTPN2 isoform PTPB. This Homo sapiens (Human) protein is Transmembrane emp24 domain-containing protein 9 (TMED9).